A 176-amino-acid chain; its full sequence is Mitochondrial inner membrane protein Mpv17 (176 aa).

4 helical membrane passes run 18–38 (VQVL…QQLV), 53–73 (TMVS…YKVL), 94–114 (GGFA…LNGL), and 131–151 (LITN…LVPL).

Belongs to the peroxisomal membrane protein PXMP2/4 family. In terms of tissue distribution, ubiquitous. Expressed in pancreas, kidney, muscle, liver, lung, placenta, brain and heart.

It is found in the mitochondrion inner membrane. Functionally, non-selective channel that modulates the membrane potential under normal conditions and oxidative stress, and is involved in mitochondrial homeostasis. Involved in mitochondrial deoxynucleoside triphosphates (dNTP) pool homeostasis and mitochondrial DNA (mtDNA) maintenance. May be involved in the regulation of reactive oxygen species metabolism and the control of oxidative phosphorylation. The protein is Mitochondrial inner membrane protein Mpv17 of Homo sapiens (Human).